A 591-amino-acid chain; its full sequence is MLILNGFSSATLALITPPFLPKGGKALSQSGPDGLASITLPLPISAERGFAPALALHYSSGGGNGPFGVGWSCATMSIARSTSHGVPQYNDSDEFLGPDGEVLVQTLSTGDAPNPVTCFAYGDVSFPQSYTVTRYQPRTESSFYRLEYWVGNSNGDDFWLLHDSNGILHLLGKTAAARLSDPQAASHTAQWLVEESVTPAGEHIYYSYLAENGDNVDLNGNEAGRDRSAMRYLSKVQYGNATPAADLYLWTSATPAVQWLFTLVFDYGERGVDPQVPPAFTAQNSWLARQDPFSLYNYGFEIRLHRLCRQVLMFHHFPDELGEADTLVSRLLLEYDENPILTQLCAARTLAYEGDGYRRAPVNNMMPPPPPPPMMGGNSSRPKSKWAIVEESKQIQALRYYSAQGYSVINKYLRGDDYPETQAKETLLSRDYLSTNEPSDEEFKNAMSVYINDIAEGLSSLPETDHRVVYRGLKLDKPALSDVLKEYTTIGNIIIDKAFMSTSPDKAWINDTILNIYLEKGHKGRILGDVAHFKGEAEMLFPPNTKLKIESIVNCGSQDFASQLSKLRLSDDATADTNRIKRIINMRVLNS.

Residues 373–576 (PMMGGNSSRP…LRLSDDATAD (204 aa)) enclose the TR mART core domain. Residues arginine 471, serine 501, and glutamate 538 contribute to the active site.

The protein belongs to the SpvB family.

The protein resides in the secreted. It catalyses the reaction L-arginyl-[protein] + NAD(+) = N(omega)-(ADP-D-ribosyl)-L-arginyl-[protein] + nicotinamide + H(+). In terms of biological role, mono-ADP-ribosylates eukaryotic muscle and non-muscle actin on 'Arg-177'. ADP-ribosylation prevents the polymerization of G-actin to F-actin, causing actin filament depolymerization, destruction of the cytoskeleton and cytotoxicity. Does not possess NAD(+)-glycohydrolase activity, unlike most mART enzymes. The polypeptide is Mono(ADP-ribosyl)transferase SpvB (spvB) (Salmonella enteritidis).